Reading from the N-terminus, the 332-residue chain is Peroxidase C1C (332 aa).

Positions 1 to 9 are cleaved as a signal peptide; sequence MLHASFSNA. Glutamine 10 carries the pyrrolidone carboxylic acid modification. Intrachain disulfides connect cysteine 20–cysteine 100, cysteine 53–cysteine 58, cysteine 106–cysteine 310, and cysteine 186–cysteine 218. N-linked (GlcNAc...) asparagine glycosylation is present at asparagine 22. The active-site Proton acceptor is histidine 51. Positions 52, 55, 57, 59, and 61 each coordinate Ca(2+). Asparagine 66 carries an N-linked (GlcNAc...) asparagine glycan. Proline 148 lines the substrate pocket. A heme b-binding site is contributed by histidine 179. Threonine 180 provides a ligand contact to Ca(2+). 3 N-linked (GlcNAc...) asparagine glycosylation sites follow: asparagine 195, asparagine 207, and asparagine 223. 3 residues coordinate Ca(2+): aspartate 231, threonine 234, and aspartate 239. A glycan (N-linked (GlcNAc...) asparagine) is linked at asparagine 264.

This sequence belongs to the peroxidase family. Classical plant (class III) peroxidase subfamily. It depends on Ca(2+) as a cofactor. The cofactor is heme b.

It localises to the secreted. It is found in the vacuole. The catalysed reaction is 2 a phenolic donor + H2O2 = 2 a phenolic radical donor + 2 H2O. In terms of biological role, removal of H(2)O(2), oxidation of toxic reductants, biosynthesis and degradation of lignin, suberization, auxin catabolism, response to environmental stresses such as wounding, pathogen attack and oxidative stress. These functions might be dependent on each isozyme/isoform in each plant tissue. In Armoracia rusticana (Horseradish), this protein is Peroxidase C1C (PRXC1C).